A 333-amino-acid chain; its full sequence is Protein XAP5 CIRCADIAN TIMEKEEPER (333 aa).

Coiled coils occupy residues 12-43 (AQDAVKIRRLEKQREAERRKIEELKNKSSDGQ) and 70-116 (TREQ…VRGD). The span at 89 to 98 (EKEKLQKLQQ) shows a compositional bias: basic and acidic residues. The tract at residues 89 to 171 (EKEKLQKLQQ…REREAEEQAE (83 aa)) is disordered. Over residues 123-136 (DEIENGSDEDEFEN) the composition is skewed to acidic residues. The segment covering 160 to 171 (PDREREAEEQAE) has biased composition (basic and acidic residues).

The protein belongs to the FAM50 family.

Its subcellular location is the nucleus. Functionally, involved in light regulation of the circadian clock and photomorphogenesis. The protein is Protein XAP5 CIRCADIAN TIMEKEEPER (XCT) of Oryza sativa subsp. indica (Rice).